We begin with the raw amino-acid sequence, 318 residues long: NADH-ubiquinone oxidoreductase chain 1 (318 aa).

8 helical membrane passes run 2-22 (FMIN…FLTL), 70-90 (MFII…SPLP), 100-120 (LGVL…LWSG), 136-156 (VAQT…VLLM), 172-192 (LWLL…TLAE), 222-242 (LFFL…AILF), 253-273 (ELYT…FLWI), and 294-314 (LPLT…TASI).

This sequence belongs to the complex I subunit 1 family. As to quaternary structure, core subunit of respiratory chain NADH dehydrogenase (Complex I) which is composed of 45 different subunits.

The protein localises to the mitochondrion inner membrane. It carries out the reaction a ubiquinone + NADH + 5 H(+)(in) = a ubiquinol + NAD(+) + 4 H(+)(out). Core subunit of the mitochondrial membrane respiratory chain NADH dehydrogenase (Complex I) which catalyzes electron transfer from NADH through the respiratory chain, using ubiquinone as an electron acceptor. Essential for the catalytic activity and assembly of complex I. The sequence is that of NADH-ubiquinone oxidoreductase chain 1 (MT-ND1) from Balaenoptera musculus (Blue whale).